We begin with the raw amino-acid sequence, 77 residues long: Translation initiation factor IF-1, chloroplastic (77 aa).

The region spanning 1-71 (MKEQKLIHEG…TRGRIIYRLR (71 aa)) is the S1-like domain.

The protein belongs to the IF-1 family. Component of the 30S ribosomal translation pre-initiation complex which assembles on the 30S ribosome in the order IF-2 and IF-3, IF-1 and N-formylmethionyl-tRNA(fMet); mRNA recruitment can occur at any time during PIC assembly.

It localises to the plastid. The protein resides in the chloroplast. Its function is as follows. One of the essential components for the initiation of protein synthesis. Stabilizes the binding of IF-2 and IF-3 on the 30S subunit to which N-formylmethionyl-tRNA(fMet) subsequently binds. Helps modulate mRNA selection, yielding the 30S pre-initiation complex (PIC). Upon addition of the 50S ribosomal subunit IF-1, IF-2 and IF-3 are released leaving the mature 70S translation initiation complex. The polypeptide is Translation initiation factor IF-1, chloroplastic (Ceratophyllum demersum (Rigid hornwort)).